The sequence spans 514 residues: Peptide chain release factor 3 (514 aa).

The tr-type G domain maps to 8 to 268; the sequence is KKRRTFAIIS…TFLKFAPEPH (261 aa). GTP contacts are provided by residues 17-24, 85-89, and 139-142; these read SHPDAGKT, DTPGH, and NKLD.

Belongs to the TRAFAC class translation factor GTPase superfamily. Classic translation factor GTPase family. PrfC subfamily.

It is found in the cytoplasm. Increases the formation of ribosomal termination complexes and stimulates activities of RF-1 and RF-2. It binds guanine nucleotides and has strong preference for UGA stop codons. It may interact directly with the ribosome. The stimulation of RF-1 and RF-2 is significantly reduced by GTP and GDP, but not by GMP. The protein is Peptide chain release factor 3 of Streptococcus sanguinis (strain SK36).